Reading from the N-terminus, the 291-residue chain is 4-diphosphocytidyl-2-C-methyl-D-erythritol kinase (291 aa).

Lysine 21 is a catalytic residue. 104 to 114 (PMGGGLGGGSS) lines the ATP pocket. The active site involves aspartate 146.

It belongs to the GHMP kinase family. IspE subfamily.

It carries out the reaction 4-CDP-2-C-methyl-D-erythritol + ATP = 4-CDP-2-C-methyl-D-erythritol 2-phosphate + ADP + H(+). It participates in isoprenoid biosynthesis; isopentenyl diphosphate biosynthesis via DXP pathway; isopentenyl diphosphate from 1-deoxy-D-xylulose 5-phosphate: step 3/6. In terms of biological role, catalyzes the phosphorylation of the position 2 hydroxy group of 4-diphosphocytidyl-2C-methyl-D-erythritol. The polypeptide is 4-diphosphocytidyl-2-C-methyl-D-erythritol kinase (Methylococcus capsulatus (strain ATCC 33009 / NCIMB 11132 / Bath)).